The following is a 222-amino-acid chain: Riboflavin kinase (222 aa).

Positions 1–92 (MVLAEDLECL…CRLFAHEGGH (92 aa)) are H-T-H motif-like. Positions 93-222 (YTLPGIVISG…DRVNVEVAYD (130 aa)) are riboflavin kinase. CDP is bound at residue 102–107 (GLGEGR). Mg(2+) contacts are provided by threonine 131 and asparagine 133. Residues serine 188 and glutamate 196 each coordinate FMN. A CDP-binding site is contributed by 201-204 (VGLR).

Belongs to the archaeal riboflavin kinase family. Requires Mg(2+) as cofactor.

It carries out the reaction riboflavin + CTP = CDP + FMN + H(+). It functions in the pathway cofactor biosynthesis; FMN biosynthesis; FMN from riboflavin (CTP route): step 1/1. In terms of biological role, catalyzes the CTP-dependent phosphorylation of riboflavin (vitamin B2) to form flavin mononucleotide (FMN). This is Riboflavin kinase (ribK) from Methanoregula boonei (strain DSM 21154 / JCM 14090 / 6A8).